The chain runs to 598 residues: N-acetylmuramoyl-L-alanine amidase (598 aa).

A signal peptide spans 1–31 (MSPGNWKTTMVVRGILLILYGLLLQPEPGTA). Disordered regions lie at residues 172 to 194 (SSAH…SPNV) and 212 to 233 (STGV…KAKS). Ser261 carries the phosphoserine modification. Asn353 carries an N-linked (GlcNAc...) asparagine glycan. The 127-residue stretch at 428–554 (FLYIHHTYVP…RQLVRTDCPG (127 aa)) folds into the N-acetylmuramoyl-L-alanine amidase domain. His432 is a Zn(2+) binding site. Cys441 and Cys447 are disulfide-bonded. Asn507 carries an N-linked (GlcNAc...) asparagine glycan. Positions 544 and 552 each coordinate Zn(2+).

This sequence belongs to the N-acetylmuramoyl-L-alanine amidase 2 family. Zn(2+) is required as a cofactor.

The protein localises to the secreted. It localises to the membrane. The catalysed reaction is Hydrolyzes the link between N-acetylmuramoyl residues and L-amino acid residues in certain cell-wall glycopeptides.. May play a scavenger role by digesting biologically active peptidoglycan (PGN) into biologically inactive fragments. Has no direct bacteriolytic activity. This chain is N-acetylmuramoyl-L-alanine amidase (PGLYRP2), found in Sus scrofa (Pig).